The sequence spans 479 residues: Aldehyde dehydrogenase family 3 member B2 (479 aa).

Catalysis depends on residues Glu-223 and Cys-257. Cys-476 carries the cysteine methyl ester modification. Cys-476 is lipidated: S-geranylgeranyl cysteine. A propeptide spans 477 to 479 (TLL) (removed in mature form).

It belongs to the aldehyde dehydrogenase family. Geranylgeranylation is important for localization to lipid droplets and enzyme activity. As to expression, expressed in testis, white adipose tissue, lung, small intestine, kidney, spleen and liver.

It is found in the lipid droplet. It catalyses the reaction an aldehyde + NAD(+) + H2O = a carboxylate + NADH + 2 H(+). The catalysed reaction is a long-chain fatty aldehyde + NAD(+) + H2O = a long-chain fatty acid + NADH + 2 H(+). The enzyme catalyses a medium-chain fatty aldehyde + NAD(+) + H2O = a medium-chain fatty acid + NADH + 2 H(+). It carries out the reaction hexadecanoate + NADH + 2 H(+) = hexadecanal + NAD(+) + H2O. It catalyses the reaction octanal + NAD(+) + H2O = octanoate + NADH + 2 H(+). It functions in the pathway alcohol metabolism; ethanol degradation; acetate from ethanol: step 2/2. Its function is as follows. Oxidizes medium and long chain fatty aldehydes in lipid droplets into non-toxic fatty acids. This is Aldehyde dehydrogenase family 3 member B2 from Mus musculus (Mouse).